We begin with the raw amino-acid sequence, 487 residues long: Glutamyl-tRNA(Gln) amidotransferase subunit A (487 aa).

Active-site charge relay system residues include K82 and S157. Catalysis depends on S181, which acts as the Acyl-ester intermediate.

Belongs to the amidase family. GatA subfamily. As to quaternary structure, heterotrimer of A, B and C subunits.

It carries out the reaction L-glutamyl-tRNA(Gln) + L-glutamine + ATP + H2O = L-glutaminyl-tRNA(Gln) + L-glutamate + ADP + phosphate + H(+). In terms of biological role, allows the formation of correctly charged Gln-tRNA(Gln) through the transamidation of misacylated Glu-tRNA(Gln) in organisms which lack glutaminyl-tRNA synthetase. The reaction takes place in the presence of glutamine and ATP through an activated gamma-phospho-Glu-tRNA(Gln). The protein is Glutamyl-tRNA(Gln) amidotransferase subunit A of Fusobacterium nucleatum subsp. nucleatum (strain ATCC 25586 / DSM 15643 / BCRC 10681 / CIP 101130 / JCM 8532 / KCTC 2640 / LMG 13131 / VPI 4355).